Here is a 402-residue protein sequence, read N- to C-terminus: Deacetylase Oant_2987 (402 aa).

Zn(2+) contacts are provided by His-70, His-72, Lys-168, His-201, His-224, and Asp-284. Residue Lys-168 is modified to N6-carboxylysine.

This sequence belongs to the metallo-dependent hydrolases superfamily. Atu3266/EF_0837 deacetylase family. Requires Zn(2+) as cofactor.

Its function is as follows. Esterase that catalyzes the deacetylation of acetyl-(R)-mandelate (in vitro). Can also hydrolyze acetyl glycolate, but with lower efficiency. Has very low N-acetyl-D-amino acid deacetylase activity with N-acetyl-D-serine and N-acetyl-D-threonine (in vitro). Theoretical substrate docking studies suggest that other N-acetylated amino acids may optimally occupy the active site and may in fact be the physiological substrates. The sequence is that of Deacetylase Oant_2987 from Brucella anthropi (strain ATCC 49188 / DSM 6882 / CCUG 24695 / JCM 21032 / LMG 3331 / NBRC 15819 / NCTC 12168 / Alc 37) (Ochrobactrum anthropi).